A 170-amino-acid chain; its full sequence is F1 capsule antigen (170 aa).

The signal sequence occupies residues 1–21 (MKKISSVIAIALFGTIATANA). The tract at residues 100–150 (GNNHQFTTKVIGKDSRDFDISPKVNGENLVGDDVVLATGSQDFFVRSIGSK) is contains potential antigenic determinants that may stimulate T-cells.

It localises to the secreted. The protein localises to the capsule. The sequence is that of F1 capsule antigen (caf1) from Yersinia pestis.